A 328-amino-acid chain; its full sequence is Formyltetrahydrofolate deformylase 2, mitochondrial (328 aa).

A mitochondrion-targeting transit peptide spans 1–12 (MIRRVSTTSCLS). In terms of domain architecture, ACT spans 46 to 129 (FHVFHCPDVV…SVVRVPSLDP (84 aa)). The active site involves Asp-272.

The protein belongs to the PurU family. Expressed in leaves, cotyledons, roots, seeds and flowers.

The protein localises to the mitochondrion. The catalysed reaction is (6R)-10-formyltetrahydrofolate + H2O = (6S)-5,6,7,8-tetrahydrofolate + formate + H(+). Its function is as follows. Deformylase involved in photorespiration. Prevents excessive accumulation of 5-formyl tetrahydrofolate (THF), a potent inhibitor of the Gly decarboxylase/Ser hydroxymethyltransferase complex. The polypeptide is Formyltetrahydrofolate deformylase 2, mitochondrial (PURU2) (Arabidopsis thaliana (Mouse-ear cress)).